The sequence spans 754 residues: LON peptidase N-terminal domain and RING finger protein 2 (754 aa).

TPR repeat units lie at residues 23-58 and 59-91; these read IAQR…QPDR and GLCL…GALR. The interval 112–136 is disordered; the sequence is PLSAENPGGEPEAPGEGGPAPEPRA. The span at 115–125 shows a compositional bias: low complexity; sequence AENPGGEPEAP. 3 TPR repeats span residues 197-230, 231-264, and 266-298; these read LRRL…APDD, NSLL…EPLL, and KGHQ…NPEC. Positions 398-439 are disordered; sequence GLKRQFPDDVEDAPDLNAPGKIPKKDLSLQRSPNSETEESQG. A compositionally biased stretch (polar residues) spans 426–439; it reads LQRSPNSETEESQG. A TPR 6 repeat occupies 447-483; the sequence is FECALCMRLLFEPVTTPCGHTFCLKCLERCLDHAPHC. Residues 449 to 487 form an RING-type zinc finger; the sequence is CALCMRLLFEPVTTPCGHTFCLKCLERCLDHAPHCPLCK. Positions 528-737 constitute a Lon N-terminal domain; that stretch reads MSELSNLTRD…AIRRILVIIT (210 aa).

The polypeptide is LON peptidase N-terminal domain and RING finger protein 2 (LONRF2) (Homo sapiens (Human)).